Consider the following 1104-residue polypeptide: Protein transport protein SEC31 homolog B (1104 aa).

7 WD repeats span residues 5-45 (KGVG…EIFK), 62-109 (PSSE…GSQP), 120-160 (VHKG…EPSH), 170-210 (ATQG…PIIN), 214-257 (SVRR…SPVR), 261-301 (GHQR…IVAE), and 304-344 (AGNN…RYGV). At T526 the chain carries Phosphothreonine. A disordered region spans residues 527 to 562 (PVSTSAKDFMPSDTDFSTKGEETQEMQEEEEESSDP). Over residues 549 to 560 (TQEMQEEEEESS) the composition is skewed to acidic residues. A WD 8 repeat occupies 662–707 (TLCDALASKLMAAGNTLAAVLCYICAGNVDRTVEIWSRSLANERDG). 4 disordered regions span residues 782 to 811 (LSAEPETNTTASGNTQPQSTMPYNQEPTQA), 851 to 874 (HQAQPAPQPSFTPAPTSNAQPSMR), 892 to 931 (QQPTMSSHSFTGPSNNAYPVPPGPGQYAPSGPSQLGQYPN), and 952 to 994 (TPGV…SNVP). Composition is skewed to polar residues over residues 786–811 (PETNTTASGNTQPQSTMPYNQEPTQA), 863–874 (PAPTSNAQPSMR), and 892–908 (QQPTMSSHSFTGPSNNA). Positions 959 to 977 (SVQPASPPTQQAAAQAAPA) are enriched in low complexity.

It belongs to the WD repeat SEC31 family. In terms of assembly, interacts with SEC13A and SEC13B.

The protein resides in the golgi apparatus. It is found in the endoplasmic reticulum. Required for protein transport from the endoplasmic reticulum to the Golgi apparatus. This chain is Protein transport protein SEC31 homolog B, found in Arabidopsis thaliana (Mouse-ear cress).